Consider the following 130-residue polypeptide: Small ribosomal subunit protein uS8 (130 aa).

It belongs to the universal ribosomal protein uS8 family.

The sequence is that of Small ribosomal subunit protein uS8 (rps22) from Agaricus bisporus (White button mushroom).